The primary structure comprises 535 residues: GMP synthase [glutamine-hydrolyzing] (535 aa).

In terms of domain architecture, Glutamine amidotransferase type-1 spans 4-210 (KILILDFGSQ…VHEICHCKPD (207 aa)). Cys-85 serves as the catalytic Nucleophile. Catalysis depends on residues His-184 and Glu-186. The GMPS ATP-PPase domain maps to 211-403 (WVMGDYIAEA…LGLPREMVYR (193 aa)). An ATP-binding site is contributed by 238–244 (SGGVDSS).

Homodimer.

It catalyses the reaction XMP + L-glutamine + ATP + H2O = GMP + L-glutamate + AMP + diphosphate + 2 H(+). Its pathway is purine metabolism; GMP biosynthesis; GMP from XMP (L-Gln route): step 1/1. Catalyzes the synthesis of GMP from XMP. The chain is GMP synthase [glutamine-hydrolyzing] from Polynucleobacter asymbioticus (strain DSM 18221 / CIP 109841 / QLW-P1DMWA-1) (Polynucleobacter necessarius subsp. asymbioticus).